We begin with the raw amino-acid sequence, 109 residues long: Large ribosomal subunit protein uL22 (109 aa).

The protein belongs to the universal ribosomal protein uL22 family. Part of the 50S ribosomal subunit.

In terms of biological role, this protein binds specifically to 23S rRNA; its binding is stimulated by other ribosomal proteins, e.g. L4, L17, and L20. It is important during the early stages of 50S assembly. It makes multiple contacts with different domains of the 23S rRNA in the assembled 50S subunit and ribosome. The globular domain of the protein is located near the polypeptide exit tunnel on the outside of the subunit, while an extended beta-hairpin is found that lines the wall of the exit tunnel in the center of the 70S ribosome. The protein is Large ribosomal subunit protein uL22 of Herminiimonas arsenicoxydans.